Consider the following 49-residue polypeptide: Large ribosomal subunit protein bL33B (49 aa).

Belongs to the bacterial ribosomal protein bL33 family.

This Acholeplasma laidlawii (strain PG-8A) protein is Large ribosomal subunit protein bL33B.